The chain runs to 561 residues: Putative transport protein YbjL (561 aa).

5 helical membrane-spanning segments follow: residues 8-28 (LLNGNYILLLFVVLALGLCLG), 32-52 (LGSIQLGNSIGVLVVSLLLGQ), 66-86 (FMLFIFCVGVEAGPNFFSIFF), 94-114 (MLALVMVGSALVIALGLGKLF), and 158-178 (NLSLGYALTYLIGLVSLIVGA). RCK C-terminal domains follow at residues 200 to 288 (RGLD…SFRN) and 292 to 373 (VFDR…RIGF). Transmembrane regions (helical) follow at residues 383 to 403 (LLAFCAFFVIGLMIGMITFQF), 406 to 426 (FSFGMGNAAGLLFAGIMLGFM), 451 to 471 (VFMAGVGLSAGSGINNGLGAI), 475 to 495 (MLIAGLIVSLVPVVICFLFGA), and 540 to 560 (AIANVLLTLAGTIIVMVWPGL).

It belongs to the AAE transporter (TC 2.A.81) family. YbjL subfamily.

The protein resides in the cell membrane. This chain is Putative transport protein YbjL, found in Escherichia coli O127:H6 (strain E2348/69 / EPEC).